We begin with the raw amino-acid sequence, 533 residues long: Glucose-6-phosphate isomerase (533 aa).

Glutamate 330 acts as the Proton donor in catalysis. Catalysis depends on residues histidine 359 and lysine 461.

This sequence belongs to the GPI family.

It localises to the cytoplasm. The catalysed reaction is alpha-D-glucose 6-phosphate = beta-D-fructose 6-phosphate. It functions in the pathway carbohydrate biosynthesis; gluconeogenesis. The protein operates within carbohydrate degradation; glycolysis; D-glyceraldehyde 3-phosphate and glycerone phosphate from D-glucose: step 2/4. Functionally, catalyzes the reversible isomerization of glucose-6-phosphate to fructose-6-phosphate. The sequence is that of Glucose-6-phosphate isomerase from Prochlorococcus marinus (strain SARG / CCMP1375 / SS120).